Reading from the N-terminus, the 457-residue chain is UDP-N-acetylmuramoylalanine--D-glutamate ligase (457 aa).

126–132 is an ATP binding site; sequence GTAGKGS.

This sequence belongs to the MurCDEF family.

It localises to the cytoplasm. It carries out the reaction UDP-N-acetyl-alpha-D-muramoyl-L-alanine + D-glutamate + ATP = UDP-N-acetyl-alpha-D-muramoyl-L-alanyl-D-glutamate + ADP + phosphate + H(+). It participates in cell wall biogenesis; peptidoglycan biosynthesis. Its function is as follows. Cell wall formation. Catalyzes the addition of glutamate to the nucleotide precursor UDP-N-acetylmuramoyl-L-alanine (UMA). This is UDP-N-acetylmuramoylalanine--D-glutamate ligase from Deinococcus radiodurans (strain ATCC 13939 / DSM 20539 / JCM 16871 / CCUG 27074 / LMG 4051 / NBRC 15346 / NCIMB 9279 / VKM B-1422 / R1).